We begin with the raw amino-acid sequence, 273 residues long: Bidirectional sugar transporter SWEET1a (273 aa).

Topologically, residues 1-6 are extracellular; the sequence is MEHIAR. The chain crosses the membrane as a helical span at residues 7 to 27; sequence FFFGVSGNVIALFLFLSPVVT. The 89-residue stretch at 7–95 folds into the MtN3/slv 1 domain; it reads FFFGVSGNVI…VIFLIFAERK (89 aa). Topologically, residues 28–42 are cytoplasmic; the sequence is FWRIIKKRSTEDFSG. Residues 43-63 traverse the membrane as a helical segment; the sequence is VPYNMTLLNCLLSAWYGLPFV. Over 64–71 the chain is Extracellular; sequence SPNNILVT. Residues 72-92 form a helical membrane-spanning segment; that stretch reads TINGTGSVIEAIYVVIFLIFA. Residues 93–101 lie on the Cytoplasmic side of the membrane; the sequence is ERKARLKMM. The chain crosses the membrane as a helical span at residues 102–122; sequence GLLGLVTSIFTMVVLVSLLAL. Residues 123–128 are Extracellular-facing; that stretch reads HGQGRK. The helical transmembrane segment at 129 to 149 threads the bilayer; that stretch reads LFCGLAATIFSICMYASPLSI. Residues 131–214 enclose the MtN3/slv 2 domain; the sequence is CGLAATIFSI…ILYAIYRNHK (84 aa). Residues 150–163 lie on the Cytoplasmic side of the membrane; the sequence is MRLVIKTKSVEFMP. Residues 164 to 184 form a helical membrane-spanning segment; it reads FLLSLSVFLCGTSWFIYGLLG. Topologically, residues 185–188 are extracellular; it reads RDPF. A helical transmembrane segment spans residues 189 to 209; the sequence is IAIPNGCGSFLGLMQLILYAI. At 210–273 the chain is on the cytoplasmic side; the sequence is YRNHKGATPA…SADDKVASQV (64 aa).

The protein belongs to the SWEET sugar transporter family. As to quaternary structure, forms homooligomers and/or heterooligomers.

It is found in the cell membrane. Functionally, mediates both low-affinity uptake and efflux of sugar across the plasma membrane. This is Bidirectional sugar transporter SWEET1a (SWEET1A) from Oryza sativa subsp. japonica (Rice).